The following is a 773-amino-acid chain: Ethylene receptor 2 (773 aa).

Transmembrane regions (helical) follow at residues 4 to 24 (EIAS…VLAI), 53 to 73 (VSDF…LYFV), 82 to 102 (WVLF…LLHG), and 122 to 142 (LTAL…PLLL). Residues C94 and H98 each coordinate Cu cation. The region spanning 187–331 (DRHTILYTTL…VVADQVTVAL (145 aa)) is the GAF domain. Residues 374-614 (TMSEGMRRPM…PETMSLLLRF (241 aa)) form the Histidine kinase domain. Positions 647-766 (QVLLVDTNDS…AMESELRRVL (120 aa)) constitute a Response regulatory domain. 4-aspartylphosphate is present on D702. K751 participates in a covalent cross-link: Glycyl lysine isopeptide (Lys-Gly) (interchain with G-Cter in ubiquitin).

It belongs to the ethylene receptor family. In terms of assembly, heteromer with ETR1. Binds to MRF3/ECIP1. Cu cation is required as a cofactor. Post-translationally, autophosphorylated predominantly on Ser residues. As to expression, expressed in seedlings, roots, leaves, flowers, mature siliques, shoot apical meristems, leaf primordia, inflorescence meristems, young floral meristems, developing petals, carpels and ovules. Low expression in stamens.

Its subcellular location is the endoplasmic reticulum membrane. In terms of biological role, ethylene receptor related to bacterial two-component regulators. Acts as a redundant negative regulator of ethylene signaling. This Arabidopsis thaliana (Mouse-ear cress) protein is Ethylene receptor 2.